Reading from the N-terminus, the 97-residue chain is Carboxypeptidase inhibitor (97 aa).

Residues 1–22 (MAATLPVFAVVFFAMVLASSQA) form the signal peptide.

The protein localises to the secreted. Functionally, potent competitive inhibitor of metallo-carboxypeptidases CPA1, CPA2, CPB, CPN, and TAF1a. Also inhibits human CPA4. Accelerates fibrinolysis in vitro and may contribute to the maintenance of host blood liquidity during feeding. This is Carboxypeptidase inhibitor from Rhipicephalus bursa (Tick).